The primary structure comprises 168 residues: Phosphopantetheine adenylyltransferase (168 aa).

S9 contributes to the substrate binding site. ATP is bound by residues 9–10 and H17; that span reads SF. 3 residues coordinate substrate: K41, L73, and R87. ATP is bound by residues 88–90, E98, and 123–129; these read GLR and YAFLSSS.

It belongs to the bacterial CoaD family. In terms of assembly, homohexamer. Mg(2+) serves as cofactor.

It is found in the cytoplasm. The catalysed reaction is (R)-4'-phosphopantetheine + ATP + H(+) = 3'-dephospho-CoA + diphosphate. It functions in the pathway cofactor biosynthesis; coenzyme A biosynthesis; CoA from (R)-pantothenate: step 4/5. Functionally, reversibly transfers an adenylyl group from ATP to 4'-phosphopantetheine, yielding dephospho-CoA (dPCoA) and pyrophosphate. This chain is Phosphopantetheine adenylyltransferase, found in Heliobacterium modesticaldum (strain ATCC 51547 / Ice1).